The chain runs to 77 residues: DNA-directed RNA polymerase subunit epsilon (77 aa).

Belongs to the RNA polymerase subunit epsilon family. As to quaternary structure, RNAP is composed of a core of 2 alpha, a beta and a beta' subunit. The core is associated with a delta subunit, and at least one of epsilon or omega. When a sigma factor is associated with the core the holoenzyme is formed, which can initiate transcription.

It catalyses the reaction RNA(n) + a ribonucleoside 5'-triphosphate = RNA(n+1) + diphosphate. In terms of biological role, a non-essential component of RNA polymerase (RNAP). The sequence is that of DNA-directed RNA polymerase subunit epsilon from Streptococcus pneumoniae serotype 19F (strain G54).